We begin with the raw amino-acid sequence, 255 residues long: uncharacterized protein (255 aa).

The [4Fe-4S] cluster site is built by Cys-122 and Cys-160.

In terms of assembly, homodimer. Requires [4Fe-4S] cluster as cofactor.

This is an uncharacterized protein from Escherichia coli (strain K12).